Here is a 533-residue protein sequence, read N- to C-terminus: DNA-directed RNA polymerase III subunit RPC3 (533 aa).

Residues 162-181 (LVPDTDSSDRGPPPPAPTLV) form a disordered region. Ser194 carries the post-translational modification Phosphoserine. The interval 197–228 (GKGKRRRSSDEDATGEPKAKKPRYTDNKEPSP) is disordered. The segment covering 211–227 (GEPKAKKPRYTDNKEPS) has biased composition (basic and acidic residues).

It belongs to the eukaryotic RPC3/POLR3C RNA polymerase subunit family. Component of the RNA polymerase III complex consisting of 17 subunits: a ten-subunit horseshoe-shaped catalytic core composed of POLR3A/RPC1, POLR3B/RPC2, POLR1C/RPAC1, POLR1D/RPAC2, POLR3K/RPC10, POLR2E/RPABC1, POLR2F/RPABC2, POLR2H/RPABC3, POLR2K/RPABC4 and POLR2L/RPABC5; a mobile stalk composed of two subunits POLR3H/RPC8 and CRCP/RPC9, protruding from the core and functioning primarily in transcription initiation; and additional subunits homologous to general transcription factors of the RNA polymerase II machinery, POLR3C/RPC3-POLR3F/RPC6-POLR3G/RPC7 heterotrimer required for transcription initiation and POLR3D/RPC4-POLR3E/RPC5 heterodimer involved in both transcription initiation and termination. Directly interacts with POLR3G/RPC7 and POLR3GL. Directly interacts with POLR3F/RPC6. Interacts with GTF3C4. As part of the RNA polymerase III complex, interacts with PKP2.

The protein localises to the nucleus. In terms of biological role, DNA-dependent RNA polymerase catalyzes the transcription of DNA into RNA using the four ribonucleoside triphosphates as substrates. Specific peripheric component of RNA polymerase III (Pol III) which synthesizes small non-coding RNAs including 5S rRNA, snRNAs, tRNAs and miRNAs from at least 500 distinct genomic loci. Part of POLR3C/RPC3-POLR3F/RPC6-POLR3G/RPC7 heterotrimer, coordinates the dynamics of Pol III stalk and clamp modules during the transition from apo to elongation state. Pol III plays a key role in sensing and limiting infection by intracellular bacteria and DNA viruses. Acts as a nuclear and cytosolic DNA sensor involved in innate immune response. Can sense non-self dsDNA that serves as template for transcription into dsRNA. The non-self RNA polymerase III transcripts, such as Epstein-Barr virus-encoded RNAs (EBERs) induce type I interferon and NF-kappa-B through the RIG-I pathway. Preferentially binds single-stranded DNA (ssDNA) in a sequence-independent manner. This is DNA-directed RNA polymerase III subunit RPC3 from Mus musculus (Mouse).